Here is a 563-residue protein sequence, read N- to C-terminus: Merozoite receptor PK66 (563 aa).

The N-terminal stretch at 1 to 13 (MNKIYYILFLSAQ) is a signal peptide. The Extracellular portion of the chain corresponds to 14–487 (CLVHMGKCER…DGKHKKKMLL (474 aa)). N-linked (GlcNAc...) asparagine glycosylation is found at Asn36, Asn107, Asn176, Asn189, Asn238, and Asn441. A helical transmembrane segment spans residues 488–508 (IIIGVTGAVCVVAVASLFYFR). Residues 509-563 (KKAQDDKYDKMDQAEAYGKTANTRKDEMLDPEASFWGEDKRASHTTPVLMEKPYY) are Cytoplasmic-facing.

Belongs to the apicomplexan parasites AMA1 family.

It is found in the membrane. In terms of biological role, merozoite receptor PK66 is a surface antigen involved in parasite invasion of erythrocytes. The protein is Merozoite receptor PK66 (PK66) of Plasmodium knowlesi (strain nuri).